A 305-amino-acid chain; its full sequence is Ribonuclease Z (305 aa).

The Zn(2+) site is built by His-61, His-63, Asp-65, His-66, His-138, Asp-208, and His-266. Residue Asp-65 is the Proton acceptor of the active site.

It belongs to the RNase Z family. In terms of assembly, homodimer. The cofactor is Zn(2+).

The catalysed reaction is Endonucleolytic cleavage of RNA, removing extra 3' nucleotides from tRNA precursor, generating 3' termini of tRNAs. A 3'-hydroxy group is left at the tRNA terminus and a 5'-phosphoryl group is left at the trailer molecule.. In terms of biological role, zinc phosphodiesterase, which displays some tRNA 3'-processing endonuclease activity. Probably involved in tRNA maturation, by removing a 3'-trailer from precursor tRNA. This is Ribonuclease Z from Methanosarcina mazei (strain ATCC BAA-159 / DSM 3647 / Goe1 / Go1 / JCM 11833 / OCM 88) (Methanosarcina frisia).